A 222-amino-acid polypeptide reads, in one-letter code: Phosphoglycolate phosphatase (222 aa).

Asp-12 serves as the catalytic Nucleophile. Mg(2+)-binding residues include Asp-12, Asp-14, and Asp-175.

It belongs to the HAD-like hydrolase superfamily. CbbY/CbbZ/Gph/YieH family. Mg(2+) serves as cofactor.

The enzyme catalyses 2-phosphoglycolate + H2O = glycolate + phosphate. It functions in the pathway organic acid metabolism; glycolate biosynthesis; glycolate from 2-phosphoglycolate: step 1/1. In terms of biological role, specifically catalyzes the dephosphorylation of 2-phosphoglycolate. Is involved in the dissimilation of the intracellular 2-phosphoglycolate formed during the DNA repair of 3'-phosphoglycolate ends, a major class of DNA lesions induced by oxidative stress. This Chromobacterium violaceum (strain ATCC 12472 / DSM 30191 / JCM 1249 / CCUG 213 / NBRC 12614 / NCIMB 9131 / NCTC 9757 / MK) protein is Phosphoglycolate phosphatase.